A 149-amino-acid polypeptide reads, in one-letter code: Putative pre-16S rRNA nuclease (149 aa).

It belongs to the YqgF nuclease family.

It is found in the cytoplasm. In terms of biological role, could be a nuclease involved in processing of the 5'-end of pre-16S rRNA. This is Putative pre-16S rRNA nuclease from Burkholderia lata (strain ATCC 17760 / DSM 23089 / LMG 22485 / NCIMB 9086 / R18194 / 383).